Consider the following 1607-residue polypeptide: Dicer-like protein 1 (1607 aa).

Positions 1–74 (MNAEMREGSS…PDTKKWIVND (74 aa)) are disordered. In terms of domain architecture, Helicase ATP-binding spans 142 to 324 (LFERAKTQNT…IARSPELEGL (183 aa)). 155–162 (LDTGSGKT) is an ATP binding site. Positions 267–270 (DEAH) match the DEAH box motif. Residues 461 to 632 (KVVILLRILR…EALPADRKLT (172 aa)) enclose the Helicase C-terminal domain. Positions 665–755 (SLICLAAFVA…RPTFTKQLPA (91 aa)) constitute a Dicer dsRNA-binding fold domain. The PAZ domain maps to 905 to 1040 (GAVTFVRDNE…IVLEPLRISP (136 aa)). 2 consecutive RNase III domains span residues 1063–1219 (LVAL…LTAQ) and 1272–1447 (AARF…VDSR). Residues Glu1312, Asp1433, and Glu1436 each contribute to the Mg(2+) site. In terms of domain architecture, DRBM spans 1478–1556 (HPVTFLAGIM…AKKAIQVLEG (79 aa)). The Zn(2+) site is built by Cys1493, His1527, Cys1568, and Cys1570.

This sequence belongs to the helicase family. Dicer subfamily. Mg(2+) is required as a cofactor. It depends on Mn(2+) as a cofactor.

Functionally, dicer-like endonuclease involved in cleaving double-stranded RNA in the RNA interference (RNAi) pathway. Produces 21 to 25 bp dsRNAs (siRNAs) which target the selective destruction of homologous RNAs leading to sequence-specific suppression of gene expression, called post-transcriptional gene silencing (PTGS). Part of a broad host defense response against viral infection and transposons. This Chaetomium globosum (strain ATCC 6205 / CBS 148.51 / DSM 1962 / NBRC 6347 / NRRL 1970) (Soil fungus) protein is Dicer-like protein 1 (DCL1).